The chain runs to 559 residues: Protein GRAVITROPIC IN THE LIGHT 1 (559 aa).

The tract at residues 107-127 (AVNRREEYDTEEEENEEEGEI) is disordered. Over residues 114-127 (YDTEEEENEEEGEI) the composition is skewed to acidic residues.

Its function is as follows. Required for red (R) and far red (FR) light-induced and phytochrome-mediated deregulation of negative gravitropism leading to randomization of hypocotyl growth orientation. The chain is Protein GRAVITROPIC IN THE LIGHT 1 from Arabidopsis thaliana (Mouse-ear cress).